The following is a 602-amino-acid chain: Aryl hydrocarbon receptor protein 1 (602 aa).

A propeptide spanning residues 1 to 2 (MY) is cleaved from the precursor. The segment covering 1-12 (MYASKRRQRNFK) has biased composition (basic residues). Residues 1-28 (MYASKRRQRNFKRVRDPPKQLTNTNPSK) form a disordered region. Short sequence motifs (nuclear localization signal) lie at residues 5–8 (KRRQ) and 28–33 (KRHRER). The bHLH domain occupies 18 to 71 (PKQLTNTNPSKRHRERLNGELETVAMLLPYDSSTISRLDKLSVLRLAVSFLQCK). 3 required for maintaining the overall integrity of the AHR:ARNT heterodimer and its transcriptional activity regions span residues 41–73 (VAML…CKAH), 133–141 (SLKSLGGFI), and 266–268 (ICV). The Nuclear export signal signature appears at 55 to 63 (LDKLSVLRL). A PAS domain is found at 126–196 (ESNFEEISLK…QQLDSNFHIP (71 aa)). A disordered region spans residues 440-467 (STSNSLFPSVPVPTPTTTKANRRRKENS).

In terms of assembly, interacts with daf-21/hsp90. Interacts with aha-1. As to expression, expressed in many distinct neuronal cells including RMED, RMEV, RMEL and RMER. Functions in URX neurons to promote aggregation behavior.

The protein localises to the nucleus. Probable ligand-activated transcriptional activator. Acts as a transcriptional regulator in GABAergic motor neuron cell fate specification and development. Promotes cell-type-specific expression of guanylate cyclase genes that have key roles in aggregation behavior and hyperoxia avoidance. Has no role in carbon dioxide avoidance. The protein is Aryl hydrocarbon receptor protein 1 of Caenorhabditis elegans.